Here is a 323-residue protein sequence, read N- to C-terminus: Small ribosomal subunit protein mS35 (323 aa).

The tract at residues 31–59 (PVPTPSLPERTPGNERPPRRKALPPRTEK) is disordered. A coiled-coil region spans residues 257 to 321 (SSERNILETL…YKESVKRLLN (65 aa)).

The protein belongs to the mitochondrion-specific ribosomal protein mS35 family. As to quaternary structure, component of the mitochondrial small ribosomal subunit (mt-SSU). Mature mammalian 55S mitochondrial ribosomes consist of a small (28S) and a large (39S) subunit. The 28S small subunit contains a 12S ribosomal RNA (12S mt-rRNA) and 30 different proteins. The 39S large subunit contains a 16S rRNA (16S mt-rRNA), a copy of mitochondrial valine transfer RNA (mt-tRNA(Val)), which plays an integral structural role, and 52 different proteins.

The protein localises to the mitochondrion. This chain is Small ribosomal subunit protein mS35, found in Homo sapiens (Human).